A 164-amino-acid polypeptide reads, in one-letter code: R-phycoerythrin alpha chain (164 aa).

Positions 82 and 139 each coordinate (2R,3E)-phycoerythrobilin.

This sequence belongs to the phycobiliprotein family. Heterodimer of an alpha and a beta chain. Post-translationally, contains two covalently linked bilin chromophores.

Its subcellular location is the plastid. The protein resides in the chloroplast thylakoid membrane. In terms of biological role, light-harvesting photosynthetic bile pigment-protein from the phycobiliprotein complex. The protein is R-phycoerythrin alpha chain (cpeA) of Lophosiphonia boldii (Red alga).